The sequence spans 356 residues: Carminomycin 4-O-methyltransferase DnrK (356 aa).

Arg153 is an S-adenosyl-L-methionine binding site. Residue Asp163 participates in substrate binding. Residues Gly187, Glu210, 237-238 (DF), and Ser252 contribute to the S-adenosyl-L-methionine site. Asn257 and Arg303 together coordinate substrate.

This sequence belongs to the class I-like SAM-binding methyltransferase superfamily. Cation-independent O-methyltransferase family. Homodimer and homotetramer in equilibrium.

The catalysed reaction is carminomycin + S-adenosyl-L-methionine = daunorubicin + S-adenosyl-L-homocysteine + H(+). It functions in the pathway antibiotic biosynthesis; daunorubicin biosynthesis. Its pathway is antibiotic biosynthesis; carminomycin biosynthesis. Its function is as follows. Involved in the biosynthesis of the anthracyclines carminomycin and daunorubicin (daunomycin) which are aromatic polyketide antibiotics that exhibit high cytotoxicity and are widely applied in the chemotherapy of a variety of cancers. In vivo, catalyzes the transfer of a methyl group from S-adenosyl-L-methionine to the 4-O-position of carminomycin to form daunorubicin. In vitro, it also methylates the anthracyclines rhodomycin D (10-carbomethoxy-13-deoxycarminomycin) and 13-deoxy-carminomycin at the 4-hydroxyl position. It is quite specific with respect to the length of the carbohydrate chain at the C7 position, but it can accept substrates with bulky substituent at C10 position. This Streptomyces peucetius protein is Carminomycin 4-O-methyltransferase DnrK (dnrK).